The following is a 197-amino-acid chain: Probable nicotinate-nucleotide adenylyltransferase (197 aa).

Belongs to the NadD family.

The catalysed reaction is nicotinate beta-D-ribonucleotide + ATP + H(+) = deamido-NAD(+) + diphosphate. It participates in cofactor biosynthesis; NAD(+) biosynthesis; deamido-NAD(+) from nicotinate D-ribonucleotide: step 1/1. In terms of biological role, catalyzes the reversible adenylation of nicotinate mononucleotide (NaMN) to nicotinic acid adenine dinucleotide (NaAD). The polypeptide is Probable nicotinate-nucleotide adenylyltransferase (Porphyromonas gingivalis (strain ATCC 33277 / DSM 20709 / CIP 103683 / JCM 12257 / NCTC 11834 / 2561)).